We begin with the raw amino-acid sequence, 451 residues long: MNKKILFLGVGGIGVSALAIAAKRLGAHVAGYDSAANKLTAKLEALGIVIFTSPSGVDVANFDIVVYSSAILSSHPLLSQARSLGIQCLQRAMFLAVLMKDFSYSLAITGTHGKTTTSSVLATLLCQLDKHSSFVVGGVVKYADSNIQVNGTDKLVIEADESDASFLFLSPQVVIITNIDLDHMATYNNSYQTLLENFTDFVSKESVKSIYLCVDDQGCRDLLAKYNQSDKNVTSYGFSINADVQIYDYHIIDEITHFKIRYKGDDLSFKLQLPGKYNVQNATACIIACLDLGFKYEDIRNALIKVTGVARRFDLYTKVISGHQVTVIDDYGHHPVEVANSISAVRDRYPNKKIIHVFQPHRYTRNRDLIKDWPKALSLADQLILLPTYSAGEQIIKGAESQDIAKGLSGYLLADGFDHAIYFLEKLANENTVILIQGAGDVTNLVEMLSE.

110 to 116 (GTHGKTT) contributes to the ATP binding site.

This sequence belongs to the MurCDEF family.

Its subcellular location is the cytoplasm. The catalysed reaction is UDP-N-acetyl-alpha-D-muramate + L-alanine + ATP = UDP-N-acetyl-alpha-D-muramoyl-L-alanine + ADP + phosphate + H(+). The protein operates within cell wall biogenesis; peptidoglycan biosynthesis. Functionally, cell wall formation. The polypeptide is UDP-N-acetylmuramate--L-alanine ligase (Francisella tularensis subsp. novicida (strain U112)).